Here is a 124-residue protein sequence, read N- to C-terminus: Fluoride-specific ion channel FluC 1 (124 aa).

Helical transmembrane passes span 1–21 (MNWL…YVTD), 30–50 (AVFP…LGLL), 56–76 (AGVA…GALT), and 102–122 (IASV…AQAL). Positions 73 and 76 each coordinate Na(+).

It belongs to the fluoride channel Fluc/FEX (TC 1.A.43) family.

The protein resides in the cell membrane. The catalysed reaction is fluoride(in) = fluoride(out). Na(+) is not transported, but it plays an essential structural role and its presence is essential for fluoride channel function. Functionally, fluoride-specific ion channel. Important for reducing fluoride concentration in the cell, thus reducing its toxicity. This chain is Fluoride-specific ion channel FluC 1, found in Streptomyces avermitilis (strain ATCC 31267 / DSM 46492 / JCM 5070 / NBRC 14893 / NCIMB 12804 / NRRL 8165 / MA-4680).